Here is a 342-residue protein sequence, read N- to C-terminus: Holliday junction branch migration complex subunit RuvB (342 aa).

Positions 1-185 are large ATPase domain (RuvB-L); the sequence is MREDYLKSDD…FGINARLEYY (185 aa). Residues Leu24, Arg25, Gly66, Lys69, Thr70, Thr71, 132–134, Arg175, Tyr185, and Arg222 each bind ATP; that span reads EDY. Position 70 (Thr70) interacts with Mg(2+). The small ATPAse domain (RuvB-S) stretch occupies residues 186 to 256; sequence DAKLLTRIVQ…IARIALQALN (71 aa). Residues 259-342 are head domain (RuvB-H); it reads HNGLDDMDNR…PPAQSGTLFE (84 aa). DNA contacts are provided by Arg314 and Arg319.

The protein belongs to the RuvB family. In terms of assembly, homohexamer. Forms an RuvA(8)-RuvB(12)-Holliday junction (HJ) complex. HJ DNA is sandwiched between 2 RuvA tetramers; dsDNA enters through RuvA and exits via RuvB. An RuvB hexamer assembles on each DNA strand where it exits the tetramer. Each RuvB hexamer is contacted by two RuvA subunits (via domain III) on 2 adjacent RuvB subunits; this complex drives branch migration. In the full resolvosome a probable DNA-RuvA(4)-RuvB(12)-RuvC(2) complex forms which resolves the HJ.

Its subcellular location is the cytoplasm. It carries out the reaction ATP + H2O = ADP + phosphate + H(+). Its function is as follows. The RuvA-RuvB-RuvC complex processes Holliday junction (HJ) DNA during genetic recombination and DNA repair, while the RuvA-RuvB complex plays an important role in the rescue of blocked DNA replication forks via replication fork reversal (RFR). RuvA specifically binds to HJ cruciform DNA, conferring on it an open structure. The RuvB hexamer acts as an ATP-dependent pump, pulling dsDNA into and through the RuvAB complex. RuvB forms 2 homohexamers on either side of HJ DNA bound by 1 or 2 RuvA tetramers; 4 subunits per hexamer contact DNA at a time. Coordinated motions by a converter formed by DNA-disengaged RuvB subunits stimulates ATP hydrolysis and nucleotide exchange. Immobilization of the converter enables RuvB to convert the ATP-contained energy into a lever motion, pulling 2 nucleotides of DNA out of the RuvA tetramer per ATP hydrolyzed, thus driving DNA branch migration. The RuvB motors rotate together with the DNA substrate, which together with the progressing nucleotide cycle form the mechanistic basis for DNA recombination by continuous HJ branch migration. Branch migration allows RuvC to scan DNA until it finds its consensus sequence, where it cleaves and resolves cruciform DNA. This Cytophaga hutchinsonii (strain ATCC 33406 / DSM 1761 / CIP 103989 / NBRC 15051 / NCIMB 9469 / D465) protein is Holliday junction branch migration complex subunit RuvB.